We begin with the raw amino-acid sequence, 191 residues long: MPKIKMIIGLGNIGKEYQDTRHNVGEWFIAKIAQDNNQSFSSNPKLNCNLAKVSIDYNNVVLVFPTTYMNNSGLAVSKVANFYKIAPAEILVVHDELDIDSGEIRLKKGGGHGGHNGLRSINQHLGTNDYLRLRIGIGHPGHKSKVANYVLSNPSIAQKKDIDSAIDNGICFLDDIINYKLEPVMQKLHTK.

Tyrosine 17 is a binding site for tRNA. The active-site Proton acceptor is histidine 22. 3 residues coordinate tRNA: tyrosine 68, asparagine 70, and asparagine 116.

It belongs to the PTH family. Monomer.

The protein resides in the cytoplasm. It catalyses the reaction an N-acyl-L-alpha-aminoacyl-tRNA + H2O = an N-acyl-L-amino acid + a tRNA + H(+). Its function is as follows. Hydrolyzes ribosome-free peptidyl-tRNAs (with 1 or more amino acids incorporated), which drop off the ribosome during protein synthesis, or as a result of ribosome stalling. Functionally, catalyzes the release of premature peptidyl moieties from peptidyl-tRNA molecules trapped in stalled 50S ribosomal subunits, and thus maintains levels of free tRNAs and 50S ribosomes. This chain is Peptidyl-tRNA hydrolase, found in Francisella tularensis subsp. tularensis (strain FSC 198).